The primary structure comprises 620 residues: uncharacterized protein (620 aa).

The Radical SAM core domain maps to 324–586 (RRYVTIAIIK…HPWEKGIYPT (263 aa)). Residues Cys338, Cys342, and Cys345 each contribute to the [4Fe-4S] cluster site. Position 552 is an N6-(pyridoxal phosphate)lysine (Lys552).

The protein belongs to the radical SAM superfamily. KamA family. It depends on [4Fe-4S] cluster as a cofactor. Pyridoxal 5'-phosphate is required as a cofactor.

This is an uncharacterized protein from Methanocaldococcus jannaschii (strain ATCC 43067 / DSM 2661 / JAL-1 / JCM 10045 / NBRC 100440) (Methanococcus jannaschii).